The primary structure comprises 403 residues: Coenzyme A biosynthesis bifunctional protein CoaBC (403 aa).

The segment at 1-197 (MISEIMHPTK…GNNLKKEGNR (197 aa)) is phosphopantothenoylcysteine decarboxylase. The phosphopantothenate--cysteine ligase stretch occupies residues 198-403 (VLILNGGTVE…VEKVKKLVKS (206 aa)). CTP contacts are provided by Asp285, Lys294, and Phe327.

It in the N-terminal section; belongs to the HFCD (homo-oligomeric flavin containing Cys decarboxylase) superfamily. This sequence in the C-terminal section; belongs to the PPC synthetase family. As to quaternary structure, homododecamer. The CoaC domain is responsible for dodecamer formation. Requires Mg(2+) as cofactor. FMN is required as a cofactor.

The catalysed reaction is N-[(R)-4-phosphopantothenoyl]-L-cysteine + H(+) = (R)-4'-phosphopantetheine + CO2. The enzyme catalyses (R)-4'-phosphopantothenate + L-cysteine + CTP = N-[(R)-4-phosphopantothenoyl]-L-cysteine + CMP + diphosphate + H(+). Its pathway is cofactor biosynthesis; coenzyme A biosynthesis. In terms of biological role, catalyzes two sequential steps in the biosynthesis of coenzyme A. In the first step cysteine is conjugated to 4'-phosphopantothenate to form 4-phosphopantothenoylcysteine. In the second step the latter compound is decarboxylated to form 4'-phosphopantotheine. The chain is Coenzyme A biosynthesis bifunctional protein CoaBC from Methanocaldococcus jannaschii (strain ATCC 43067 / DSM 2661 / JAL-1 / JCM 10045 / NBRC 100440) (Methanococcus jannaschii).